We begin with the raw amino-acid sequence, 174 residues long: Non-classical export protein 2 homolog 1 (174 aa).

Residues 1 to 7 (MLSAADN) lie on the Cytoplasmic side of the membrane. The chain crosses the membrane as a helical span at residues 8-28 (LVRIINAVFLIISIGLISGLI). At 29–41 (GTQTKHSSRVNFC) the chain is on the extracellular side. A helical transmembrane segment spans residues 42 to 62 (MFAAVYGLVTDSLYGFLANFW). At 63–69 (TSLTYPA) the chain is on the cytoplasmic side. The chain crosses the membrane as a helical span at residues 70 to 90 (ILLVLDFLNFIFTFVAATALA). Topologically, residues 91 to 122 (VGIRCHSCKNKTYLEQNKIIQGSSSRCHQSQA) are extracellular. The helical transmembrane segment at 123–143 (AVAFFYFSCFLFLIKVTVATM) threads the bilayer. Residues 144–174 (GMMQNGGFGSNTGFSRRRARRQMGIPTISQV) lie on the Cytoplasmic side of the membrane.

Belongs to the NCE102 family.

The protein localises to the cell membrane. Involved in membrane organization. Required for the formation of membrane compartments of CAN1 (MCCs), localization of CAN1 at the MCCs and subsequent invagination of the plasma membrane at the MCCs sites. Involved in eisosome organization and might act as a sensor of sphingolipids that regulates plasma membrane function. Involved in a novel pathway of export of proteins that lack a cleavable signal sequence. Non-classical export pathway also functions as an alternative clearance/detoxification pathway to eliminate damaged material, when the basic repair pathway is not sufficient. This Saccharomyces cerevisiae (strain ATCC 204508 / S288c) (Baker's yeast) protein is Non-classical export protein 2 homolog 1 (FHN1).